The sequence spans 1889 residues: E3 ubiquitin-protein ligase UBR3 (1889 aa).

The disordered stretch occupies residues 1 to 27 (MAAAAAAAAVGDPQPPQPEAPAQGLAL). The UBR-type zinc finger occupies 118–189 (ALCGLVWTAN…ESGFCRRHQI (72 aa)). The disordered stretch occupies residues 338 to 362 (LGQIDSSDEEDQDGSQGLGKRKRVK). 2 positions are modified to phosphoserine: S343 and S344. 2 consecutive transmembrane segments (helical) span residues 761–781 (MLEG…HLGM) and 919–939 (LLHC…ILMD). Residues 1167-1199 (KKITAAEKKTLDKEERRQKARERQQKLLAEFAS) adopt a coiled-coil conformation. S1199 is subject to Phosphoserine. The RING-type; degenerate zinc finger occupies 1306-1364 (DSSCLLAVSIGWEGGVYVQTCGHTLHIDCHKSYMESLRNDQVLQGFSVDKGEFTCPLCR). The chain crosses the membrane as a helical span at residues 1807–1827 (QNCGAGTGIFLLINASVIIII).

The protein belongs to the E3 ubiquitin-protein ligase UBR1-like family. As to quaternary structure, interacts with UBE2A and UBE2B. Expressed in numerous cells of the smell, touch, vision, hearing and taste senses. Expressed in cells of the olfactory pathway, including the olfactory cell layer of the main olfactory epithelium (MOE), a mitral neuron cell layer of the olfactory bulb (OB), and a pyramidal cell layer of the piriform cortex of the olfactory cortex (OC). Expressed in the vomeronasal sensory epithelium of the vomeronasal organ (VNO) and the mitral cells of the accessory olfactory bulb. Expressed in tactile tissues, including the dorsal root ganglion, trigeminal ganglion and follicle-sinus complexes. Expressed in cells between hair follicle and sinus and also in the region of the rete ridge collar. Expressed in taste buds of the fungiform, circumvallate, and foliate papillae. Expressed in the spiral ganglion, the organ of Corti of the cochlea in the inner ear, in the sensory epithelium of macula and vestibular ganglion of the balancing system (at protein level). Expressed in the liver and skeletal muscle.

The protein resides in the membrane. The catalysed reaction is S-ubiquitinyl-[E2 ubiquitin-conjugating enzyme]-L-cysteine + [acceptor protein]-L-lysine = [E2 ubiquitin-conjugating enzyme]-L-cysteine + N(6)-ubiquitinyl-[acceptor protein]-L-lysine.. It participates in protein modification; protein ubiquitination. Functionally, E3 ubiquitin-protein ligase which is a component of the N-end rule pathway. Does not bind to proteins bearing specific N-terminal residues that are destabilizing according to the N-end rule, leading to their ubiquitination and subsequent degradation. May play a role in Shh signaling by mediating the ubiquitination of Kif7. May be important for MYH9 function in certain tissues, possibly by regulating the ubiquitination of MYH9 and consequently affecting its interaction with MYO7A. The protein is E3 ubiquitin-protein ligase UBR3 (Ubr3) of Mus musculus (Mouse).